The following is a 290-amino-acid chain: Thymidylate synthase (290 aa).

A dUMP-binding site is contributed by Arg-31. His-61 lines the (6R)-5,10-methylene-5,6,7,8-tetrahydrofolate pocket. 152-153 (RR) provides a ligand contact to dUMP. The active-site Nucleophile is Cys-172. DUMP is bound by residues 192–195 (RSAD), Asn-203, and 233–235 (HIY). Asp-195 is a (6R)-5,10-methylene-5,6,7,8-tetrahydrofolate binding site. Ala-289 serves as a coordination point for (6R)-5,10-methylene-5,6,7,8-tetrahydrofolate.

The protein belongs to the thymidylate synthase family. Bacterial-type ThyA subfamily. As to quaternary structure, homodimer.

The protein localises to the cytoplasm. It catalyses the reaction dUMP + (6R)-5,10-methylene-5,6,7,8-tetrahydrofolate = 7,8-dihydrofolate + dTMP. It participates in pyrimidine metabolism; dTTP biosynthesis. Its function is as follows. Catalyzes the reductive methylation of 2'-deoxyuridine-5'-monophosphate (dUMP) to 2'-deoxythymidine-5'-monophosphate (dTMP) while utilizing 5,10-methylenetetrahydrofolate (mTHF) as the methyl donor and reductant in the reaction, yielding dihydrofolate (DHF) as a by-product. This enzymatic reaction provides an intracellular de novo source of dTMP, an essential precursor for DNA biosynthesis. In Psychrobacter cryohalolentis (strain ATCC BAA-1226 / DSM 17306 / VKM B-2378 / K5), this protein is Thymidylate synthase.